The sequence spans 411 residues: Elongation factor 1-gamma (411 aa).

One can recognise a GST N-terminal domain in the interval 3-84 (LTLWSGVNPE…HIARLDRSGG (82 aa)). Positions 90 to 216 (TPLEGSQVDM…QGATFGAREG (127 aa)) constitute a GST C-terminal domain. The segment at 212–265 (GAREGGAKGQGRGCARPGREEAERAAAAADGAEEEDEAPREKKKPNPLDELPPS) is disordered. The span at 214-223 (REGGAKGQGR) shows a compositional bias: gly residues. Residues 255–411 (KPNPLDELPP…RPVLEGRVFK (157 aa)) form the EF-1-gamma C-terminal domain.

EF-1 is composed of four subunits: alpha, beta, delta, and gamma.

Functionally, probably plays a role in anchoring the complex to other cellular components. The sequence is that of Elongation factor 1-gamma from Trypanosoma cruzi.